The chain runs to 143 residues: Large ribosomal subunit protein uL11 (143 aa).

This sequence belongs to the universal ribosomal protein uL11 family. Part of the ribosomal stalk of the 50S ribosomal subunit. Interacts with L10 and the large rRNA to form the base of the stalk. L10 forms an elongated spine to which L12 dimers bind in a sequential fashion forming a multimeric L10(L12)X complex. One or more lysine residues are methylated.

Its function is as follows. Forms part of the ribosomal stalk which helps the ribosome interact with GTP-bound translation factors. The polypeptide is Large ribosomal subunit protein uL11 (Paraburkholderia phytofirmans (strain DSM 17436 / LMG 22146 / PsJN) (Burkholderia phytofirmans)).